We begin with the raw amino-acid sequence, 298 residues long: Probable endonuclease 4 (298 aa).

Histidine 69, histidine 111, glutamate 146, aspartate 180, histidine 183, histidine 215, aspartate 228, histidine 230, and glutamate 260 together coordinate Zn(2+).

The protein belongs to the AP endonuclease 2 family. The cofactor is Zn(2+).

The enzyme catalyses Endonucleolytic cleavage to 5'-phosphooligonucleotide end-products.. In terms of biological role, endonuclease IV plays a role in DNA repair. It cleaves phosphodiester bonds at apurinic or apyrimidinic (AP) sites, generating a 3'-hydroxyl group and a 5'-terminal sugar phosphate. In Bacillus cereus (strain G9842), this protein is Probable endonuclease 4.